Here is a 1166-residue protein sequence, read N- to C-terminus: Zinc finger CCHC domain-containing protein 2 (1166 aa).

4 disordered regions span residues 1–85 (MLRM…GGHA), 205–240 (RAEG…CAKL), 550–668 (SSAD…ARFS), and 904–982 (PASF…ISAV). Pro residues predominate over residues 43-64 (PPPPPTGLPRGPPPPPSPPRGL). Low complexity predominate over residues 65 to 76 (EPPVASGPTAGA). Residues 214-223 (EDEPSGDGEQ) are compositionally biased toward acidic residues. Over residues 572–587 (PQVEKEKVKKTEDRLN) the composition is skewed to basic and acidic residues. The segment covering 624–633 (SSESYSSPSS) has biased composition (low complexity). The segment covering 634–653 (PRHDGRESLESEEEKDRDSD) has biased composition (basic and acidic residues). Residues 919–947 (LPTQNSSALNAATSAQPASTGISPSQSTV) show a composition bias toward polar residues. Pro residues predominate over residues 949 to 963 (PAVPTHTPGPAPSPS). Residues 964–982 (PALTHSTAQSDSTSYISAV) show a composition bias toward polar residues. Residues 1119-1136 (VSCYNCGVSGHYAQDCKQ) form a CCHC-type zinc finger.

This is Zinc finger CCHC domain-containing protein 2 (Zcchc2) from Mus musculus (Mouse).